The primary structure comprises 177 residues: Large ribosomal subunit protein uL6 (177 aa).

The protein belongs to the universal ribosomal protein uL6 family. In terms of assembly, part of the 50S ribosomal subunit.

Functionally, this protein binds to the 23S rRNA, and is important in its secondary structure. It is located near the subunit interface in the base of the L7/L12 stalk, and near the tRNA binding site of the peptidyltransferase center. The sequence is that of Large ribosomal subunit protein uL6 from Methylobacillus flagellatus (strain ATCC 51484 / DSM 6875 / VKM B-1610 / KT).